The sequence spans 227 residues: N-acetyltransferase 8 (227 aa).

Over Met-1–Thr-42 the chain is Cytoplasmic. The chain crosses the membrane as a helical; Signal-anchor for type II membrane protein span at residues Leu-43 to Ala-63. Residues Leu-61 to Pro-220 form the N-acetyltransferase domain. Over Leu-64–Leu-227 the chain is Lumenal.

The protein belongs to the NAT8 family. In terms of tissue distribution, preferentially expressed in liver and kidney. Also detected in brain (at protein level).

It localises to the endoplasmic reticulum-Golgi intermediate compartment membrane. The protein localises to the endoplasmic reticulum membrane. The catalysed reaction is L-lysyl-[protein] + acetyl-CoA = N(6)-acetyl-L-lysyl-[protein] + CoA + H(+). The enzyme catalyses an S-substituted L-cysteine + acetyl-CoA = an N-acetyl-L-cysteine-S-conjugate + CoA + H(+). The protein operates within sulfur metabolism; glutathione metabolism. Functionally, endoplasmic reticulum (ER)-membrane-bound lysine N-acetyltransferase catalyzing the N6-acetylation of lysine residues in the lumen of the ER in various proteins, including PROM1 and BACE1, using acetyl-CoA as acetyl donor. Thereby, may regulate apoptosis through the acetylation and the regulation of the expression of PROM1. May also regulate amyloid beta-peptide secretion through acetylation of BACE1 and the regulation of its expression in neurons. N(6)-lysine acetylation in the ER maintains protein homeostasis and regulates reticulophagy. Alternatively, acetylates the free alpha-amino group of cysteine S-conjugates to form mercapturic acids. This is the final step in a major route for detoxification of a wide variety of reactive electrophiles which starts with their incorporation into glutathione S-conjugates. The glutathione S-conjugates are then further processed into cysteine S-conjugates and finally mercapturic acids which are water soluble and can be readily excreted in urine or bile. This chain is N-acetyltransferase 8, found in Homo sapiens (Human).